Reading from the N-terminus, the 641-residue chain is MNIRSNPDTTRPAVTTGGLPSSKKIYATPAAAPDLRVPLREIILSEGAGEPNLPIYDTSGPYTDPSVTIDVNAGLSRARTQWVKERGGVEEYQGRDVKPEDNGNVGAAHAAKSFTAYHKPLRGIGDAPITQYEFARRGIITKEMIYVAERENLGRKQQLERAEAALADGESFGASVPAFITPEFVRDEIARGRAIIPANINHGELEPMIIGRNFLTKINANIGNSAVTSSVEEEVDKMVWAIRWGADTVMDLSTGRNIHTTREWILRNSPVPIGTVPIYQALEKCEGDPVKLTWELYKDTLIEQCEQGVDYFTIHAGVRLQYIHLTANRVTGIVSRGGSIMAKWCLAHHKESFLYTHFDEICDLMRKYDVSFSLGDGLRPGSIADANDRAQFAELETLGELTKIAWAKGCQVMIEGPGHVPMHKIKINMDKQLKECGEAPFYTLGPLTTDIAPGYDHITSGIGAAMIGWFGCAMLCYVTPKEHLGLPDRNDVKVGVITYKIAAHAADLAKGHPAAQLRDDAVSRARFDFRWQDQFNLGLDPDTAQAFHDETLPKDAHKVAHFCSMCGPKFCSMKITQDVRDYAAGLGDNEKAALYPAGSVGMSISGVIEDGMAQMSAKFRDMGEHLYLDAEKVKESNKALS.

The span at 1-13 (MNIRSNPDTTRPA) shows a compositional bias: polar residues. Residues 1-21 (MNIRSNPDTTRPAVTTGGLPS) are disordered. Substrate-binding positions include asparagine 221, methionine 250, tyrosine 279, histidine 315, 335-337 (SRG), 376-379 (DGLR), and glutamate 415. Histidine 419 lines the Zn(2+) pocket. Tyrosine 442 contributes to the substrate binding site. Histidine 483 contributes to the Zn(2+) binding site. [4Fe-4S] cluster is bound by residues cysteine 563, cysteine 566, and cysteine 571.

The protein belongs to the ThiC family. As to quaternary structure, homodimer. It depends on [4Fe-4S] cluster as a cofactor.

The catalysed reaction is 5-amino-1-(5-phospho-beta-D-ribosyl)imidazole + S-adenosyl-L-methionine = 4-amino-2-methyl-5-(phosphooxymethyl)pyrimidine + CO + 5'-deoxyadenosine + formate + L-methionine + 3 H(+). It functions in the pathway cofactor biosynthesis; thiamine diphosphate biosynthesis. Functionally, catalyzes the synthesis of the hydroxymethylpyrimidine phosphate (HMP-P) moiety of thiamine from aminoimidazole ribotide (AIR) in a radical S-adenosyl-L-methionine (SAM)-dependent reaction. The chain is Phosphomethylpyrimidine synthase from Rhodopseudomonas palustris (strain BisB5).